A 523-amino-acid polypeptide reads, in one-letter code: 2-isopropylmalate synthase (523 aa).

Positions 5–267 constitute a Pyruvate carboxyltransferase domain; sequence VIIFDTTLRD…HTAINHQEIW (263 aa). Mn(2+) is bound by residues Asp14, His202, His204, and Asn238. The segment at 392–523 is regulatory domain; it reads RLDYFSVQSG…QHNENNKETV (132 aa).

It belongs to the alpha-IPM synthase/homocitrate synthase family. LeuA type 1 subfamily. Homodimer. Mn(2+) serves as cofactor.

Its subcellular location is the cytoplasm. The enzyme catalyses 3-methyl-2-oxobutanoate + acetyl-CoA + H2O = (2S)-2-isopropylmalate + CoA + H(+). It participates in amino-acid biosynthesis; L-leucine biosynthesis; L-leucine from 3-methyl-2-oxobutanoate: step 1/4. Functionally, catalyzes the condensation of the acetyl group of acetyl-CoA with 3-methyl-2-oxobutanoate (2-ketoisovalerate) to form 3-carboxy-3-hydroxy-4-methylpentanoate (2-isopropylmalate). This Escherichia coli (strain SMS-3-5 / SECEC) protein is 2-isopropylmalate synthase.